Consider the following 236-residue polypeptide: Biosynthetic peptidoglycan transglycosylase (236 aa).

The chain crosses the membrane as a helical span at residues 17–37 (IVILVALALLALPYLLTILYG).

It belongs to the glycosyltransferase 51 family.

It is found in the cell inner membrane. The catalysed reaction is [GlcNAc-(1-&gt;4)-Mur2Ac(oyl-L-Ala-gamma-D-Glu-L-Lys-D-Ala-D-Ala)](n)-di-trans,octa-cis-undecaprenyl diphosphate + beta-D-GlcNAc-(1-&gt;4)-Mur2Ac(oyl-L-Ala-gamma-D-Glu-L-Lys-D-Ala-D-Ala)-di-trans,octa-cis-undecaprenyl diphosphate = [GlcNAc-(1-&gt;4)-Mur2Ac(oyl-L-Ala-gamma-D-Glu-L-Lys-D-Ala-D-Ala)](n+1)-di-trans,octa-cis-undecaprenyl diphosphate + di-trans,octa-cis-undecaprenyl diphosphate + H(+). It participates in cell wall biogenesis; peptidoglycan biosynthesis. Peptidoglycan polymerase that catalyzes glycan chain elongation from lipid-linked precursors. The chain is Biosynthetic peptidoglycan transglycosylase from Rhodopseudomonas palustris (strain ATCC BAA-98 / CGA009).